The primary structure comprises 97 residues: Protein RnfH (97 aa).

This sequence belongs to the UPF0125 (RnfH) family.

The protein is Protein RnfH of Paramagnetospirillum magneticum (strain ATCC 700264 / AMB-1) (Magnetospirillum magneticum).